The chain runs to 329 residues: 4-hydroxythreonine-4-phosphate dehydrogenase (329 aa).

2 residues coordinate substrate: His136 and Thr137. Positions 166, 211, and 266 each coordinate a divalent metal cation. Residues Lys274, Asn283, and Arg292 each contribute to the substrate site.

The protein belongs to the PdxA family. As to quaternary structure, homodimer. Zn(2+) serves as cofactor. It depends on Mg(2+) as a cofactor. Co(2+) is required as a cofactor.

The protein resides in the cytoplasm. It carries out the reaction 4-(phosphooxy)-L-threonine + NAD(+) = 3-amino-2-oxopropyl phosphate + CO2 + NADH. The protein operates within cofactor biosynthesis; pyridoxine 5'-phosphate biosynthesis; pyridoxine 5'-phosphate from D-erythrose 4-phosphate: step 4/5. In terms of biological role, catalyzes the NAD(P)-dependent oxidation of 4-(phosphooxy)-L-threonine (HTP) into 2-amino-3-oxo-4-(phosphooxy)butyric acid which spontaneously decarboxylates to form 3-amino-2-oxopropyl phosphate (AHAP). This Escherichia coli (strain K12 / MC4100 / BW2952) protein is 4-hydroxythreonine-4-phosphate dehydrogenase.